A 145-amino-acid polypeptide reads, in one-letter code: uncharacterized protein (145 aa).

Residues 71-95 are disordered; it reads GARGRGRTYTKGGSSRSPASWAEQG.

This is an uncharacterized protein from Homo sapiens (Human).